A 239-amino-acid chain; its full sequence is 1-(5-phosphoribosyl)-5-[(5-phosphoribosylamino)methylideneamino] imidazole-4-carboxamide isomerase (239 aa).

D8 (proton acceptor) is an active-site residue. D129 acts as the Proton donor in catalysis.

It belongs to the HisA/HisF family.

The protein localises to the cytoplasm. The enzyme catalyses 1-(5-phospho-beta-D-ribosyl)-5-[(5-phospho-beta-D-ribosylamino)methylideneamino]imidazole-4-carboxamide = 5-[(5-phospho-1-deoxy-D-ribulos-1-ylimino)methylamino]-1-(5-phospho-beta-D-ribosyl)imidazole-4-carboxamide. The protein operates within amino-acid biosynthesis; L-histidine biosynthesis; L-histidine from 5-phospho-alpha-D-ribose 1-diphosphate: step 4/9. The sequence is that of 1-(5-phosphoribosyl)-5-[(5-phosphoribosylamino)methylideneamino] imidazole-4-carboxamide isomerase from Bacillus cytotoxicus (strain DSM 22905 / CIP 110041 / 391-98 / NVH 391-98).